The sequence spans 438 residues: Cytochrome P450 monooxygenase claJ (438 aa).

Cysteine 378 contacts heme.

The protein belongs to the cytochrome P450 family. Heme serves as cofactor.

The protein operates within secondary metabolite biosynthesis. In terms of biological role, cytochrome P450 monooxygenase; part of the cla gene cluster that produces clavatol and ortho-quinone methide. The clavatol biosynthesis cluster cla and the terrestric acid cluster tra are both involved in the production of peniphenones and penilactones. The non-reducing PKS claF is responsible for the formation of clavatol from successive condensations of 3 malonyl-CoA units, presumably with a simple acetyl-CoA starter unit, and 2 methylation steps. The esterase claE probably collaborates with claF by catalyzing the hydrolysis of ACP-bound acyl intermediates to free the ACP from stalled intermediates. The clavatol oxidase claD then converts clavatol to hydroxyclavatol. Spontaneous dehydration of hydroxyclavatol leads to the accumulation of the highly active ortho-quinone methide. On the other hand, the PKS-NRPS hybrid traA is involved in the formation of crustosic acid, with the help of traB and traD. The polyketide synthase module (PKS) of traA is responsible for the synthesis of the polyketide backbone via the condensation of an acetyl-CoA starter unit with 3 malonyl-CoA units. The downstream nonribosomal peptide synthetase (NRPS) module then amidates the carboxyl end of the polyketide with L-malic acid. Because traA lacks a designated enoylreductase (ER) domain, the required activity is provided the enoyl reductase traG. Crustosic acid undergoes decarboxylation and isomerization to the terrestric acid, catalyzed by the 2-oxoglutarate-dependent dioxygenase traH. Both acids are further converted to the 2 gamma-butyrolactones (R)-5-methyltetronic acid and (S)-5-carboxylmethyltetronic acid, with involvement of the cytochrome P450 monooxygenase claJ. Spontaneous addition of the methide to these gamma-butyrolactones leads to peniphenone D and penilactone D, which undergo again stereospecific attacking by methide to give penilactones A and B. The sequence is that of Cytochrome P450 monooxygenase claJ from Penicillium crustosum (Blue mold fungus).